The following is a 264-amino-acid chain: Exosome complex component Rrp4 (264 aa).

The S1 motif domain maps to G65–K137. Residues R147–I206 enclose the KH domain. Residues S244–D258 show a composition bias toward acidic residues. Positions S244–P264 are disordered.

The protein belongs to the RRP4 family. As to quaternary structure, component of the archaeal exosome complex. Forms a trimer of Rrp4 and/or Csl4 subunits. The trimer associates with a hexameric ring-like arrangement composed of 3 Rrp41-Rrp42 heterodimers.

It is found in the cytoplasm. Its function is as follows. Non-catalytic component of the exosome, which is a complex involved in RNA degradation. Increases the RNA binding and the efficiency of RNA degradation. Confers strong poly(A) specificity to the exosome. The chain is Exosome complex component Rrp4 from Pyrococcus furiosus (strain ATCC 43587 / DSM 3638 / JCM 8422 / Vc1).